The primary structure comprises 496 residues: Anaerobic nitric oxide reductase flavorubredoxin (496 aa).

Residues 30 to 210 form a zinc metallo-hydrolase region; sequence TKGTSYNSYL…PFSALVTAKI (181 aa). Residues histidine 79, glutamate 81, aspartate 83, histidine 147, aspartate 166, and histidine 227 each contribute to the Fe cation site. The Flavodoxin-like domain maps to 254–393; sequence ITIFYDSMSN…LCREHGQFIA (140 aa). FMN is bound by residues 260-264 and 342-369; these read SMSNN and AFGS…ETAV. In terms of domain architecture, Rubredoxin-like spans 444-495; it reads KQCMLCSVCNWVYDPEIGEPNQGVEPNTPWSSVPNDFLCPECHLGKDVFVEI. Fe cation-binding residues include cysteine 449, cysteine 452, cysteine 482, and cysteine 485.

It in the N-terminal section; belongs to the zinc metallo-hydrolase group 3 family. Homotetramer. The cofactor is Fe cation. It depends on FMN as a cofactor.

It localises to the cytoplasm. Its pathway is nitrogen metabolism; nitric oxide reduction. Its function is as follows. Anaerobic nitric oxide reductase; uses NADH to detoxify nitric oxide (NO), protecting several 4Fe-4S NO-sensitive enzymes. Has at least 2 reductase partners, only one of which (NorW, flavorubredoxin reductase) has been identified. NO probably binds to the di-iron center; electrons enter from the NorW at rubredoxin and are transferred sequentially to the FMN center and the di-iron center. Also able to function as an aerobic oxygen reductase. This chain is Anaerobic nitric oxide reductase flavorubredoxin, found in Aliivibrio fischeri (strain ATCC 700601 / ES114) (Vibrio fischeri).